We begin with the raw amino-acid sequence, 186 residues long: Peptide deformylase (186 aa).

Residues Cys99 and His141 each coordinate Fe cation. Glu142 is an active-site residue. His145 is a Fe cation binding site.

The protein belongs to the polypeptide deformylase family. Fe(2+) serves as cofactor.

It catalyses the reaction N-terminal N-formyl-L-methionyl-[peptide] + H2O = N-terminal L-methionyl-[peptide] + formate. In terms of biological role, removes the formyl group from the N-terminal Met of newly synthesized proteins. Requires at least a dipeptide for an efficient rate of reaction. N-terminal L-methionine is a prerequisite for activity but the enzyme has broad specificity at other positions. This Chlamydia pneumoniae (Chlamydophila pneumoniae) protein is Peptide deformylase.